A 97-amino-acid polypeptide reads, in one-letter code: Peptide YY (97 aa).

A signal peptide spans 1 to 28; it reads MMSGRRSWPAMATVLLTLLVCLGELVDA. Ser-41 bears the Phosphoserine mark. Phe-64 bears the Phenylalanine amide mark. Positions 68–97 are excised as a propeptide; it reads DFSEALLSILLFPDREDPPVKSRPEGAYLW.

Belongs to the NPY family.

It is found in the secreted. Functionally, this gut peptide inhibits exocrine pancreatic secretion, has a vasoconstrictory action and inhibitis jejunal and colonic mobility. The sequence is that of Peptide YY (PYY) from Bos taurus (Bovine).